A 374-amino-acid chain; its full sequence is C-C chemokine receptor type 2 (374 aa).

Over 1–42 (MLSTSRSRFIRNTNESGEEVTTFFDYDYGAPCHKFDVKQIGA) the chain is Extracellular. Asn-14 carries an N-linked (GlcNAc...) asparagine glycan. Sulfotyrosine is present on Tyr-26. A helical transmembrane segment spans residues 43–70 (QLLPPLYSLVFIFGFVGNMLVVLILINC). The Cytoplasmic portion of the chain corresponds to 71-80 (KKLKCLTDIY). A helical transmembrane segment spans residues 81–100 (LLNLAISDLLFLITLPLWAH). Topologically, residues 101 to 114 (SAANEWVFGNAMCK) are extracellular. A disulfide bridge links Cys-113 with Cys-190. The helical transmembrane segment at 115-136 (LFTGLYHIGYFGGIFFIILLTI) threads the bilayer. The Cytoplasmic segment spans residues 137-153 (DRYLAIVHAVFALKART). At Tyr-139 the chain carries Phosphotyrosine; by JAK2. A helical membrane pass occupies residues 154-178 (VTFGVVTSVITWLVAVFASVPGIIF). Topologically, residues 179 to 206 (TKCQKEDSVYVCGPYFPRGWNNFHTIMR) are extracellular. A helical membrane pass occupies residues 207–226 (NILGLVLPLLIMVICYSGIL). The Cytoplasmic portion of the chain corresponds to 227 to 243 (KTLLRCRNEKKRHRAVR). The helical transmembrane segment at 244 to 268 (VIFTIMIVYFLFWTPYNIVILLNTF) threads the bilayer. Residues 269 to 285 (QEFFGLSNCESTSQLDQ) are Extracellular-facing. A helical membrane pass occupies residues 286 to 309 (ATQVTETLGMTHCCINPIIYAFVG). Residues 310–374 (EKFRSLFHIA…EASLQDKEGA (65 aa)) lie on the Cytoplasmic side of the membrane. Residues 348–374 (QGLLDGRGKGKSIGRAPEASLQDKEGA) form a disordered region.

It belongs to the G-protein coupled receptor 1 family. In terms of assembly, interacts with ARRB1. Interacts (via extracellular N-terminal region) with beta-defensin DEFB106A/DEFB106B; this interaction may preferentially require specific tyrosine sulfation on CCR2. Interacts with NUP85; the interaction is required for CCR2 clusters formation on the cell membrane and CCR2 signaling. (Microbial infection) Binds to HIV-1 Tat. In terms of processing, N-glycosylated. Sulfation increases the affinity for both monomeric and dimeric CCL2 with stronger binding to the monomeric form. Binding of sulfated CCR2 to CCL2 promotes conversion of CCL2 from dimer to monomer. Expressed by monocytes and IL2-activated NK cells. Abundantly expressed on CD14+/CD16- monocytes and weakly on CD14+/CD16+ monocytes, type 2 dendritic cells (DCs) and plasmacytoid DCs (at protein level).

Its subcellular location is the cell membrane. Key functional receptor for CCL2 but can also bind CCL7, and CCL12. Also transduces signaling mediated by CCL13. Its binding with CCL2 on monocytes and macrophages mediates chemotaxis and migration induction through the activation of the PI3K cascade, the small G protein Rac and lamellipodium protrusion. Also acts as a receptor for the beta-defensin DEFB106A/DEFB106B. Regulates the expression of T-cell inflammatory cytokines and T-cell differentiation, promoting the differentiation of T-cells into T-helper 17 cells (Th17) during inflammation. Facilitates the export of mature thymocytes by enhancing directional movement of thymocytes to sphingosine-1-phosphate stimulation and up-regulation of S1P1R expression; signals through the JAK-STAT pathway to regulate FOXO1 activity leading to an increased expression of S1P1R. Plays an important role in mediating peripheral nerve injury-induced neuropathic pain. Increases NMDA-mediated synaptic transmission in both dopamine D1 and D2 receptor-containing neurons, which may be caused by MAPK/ERK-dependent phosphorylation of GRIN2B/NMDAR2B. Mediates the recruitment of macrophages and monocytes to the injury site following brain injury. Functionally, (Microbial infection) Alternative coreceptor with CD4 for HIV-1 infection. The chain is C-C chemokine receptor type 2 (CCR2) from Homo sapiens (Human).